Here is a 350-residue protein sequence, read N- to C-terminus: Heat-inducible transcription repressor HrcA (350 aa).

It belongs to the HrcA family.

In terms of biological role, negative regulator of class I heat shock genes (grpE-dnaK-dnaJ and groELS operons). Prevents heat-shock induction of these operons. This Xanthomonas oryzae pv. oryzae (strain KACC10331 / KXO85) protein is Heat-inducible transcription repressor HrcA.